A 241-amino-acid polypeptide reads, in one-letter code: Large ribosomal subunit protein uL3 (241 aa).

Disordered stretches follow at residues 139 to 166 (VSHR…PGHM) and 214 to 241 (ADAP…QEGA). Gln151 carries the post-translational modification N5-methylglutamine. A compositionally biased stretch (low complexity) spans 229–241 (AAAEAPAAEQEGA).

In terms of assembly, part of the 50S ribosomal subunit. Forms a cluster with proteins L14 and L19. In terms of processing, methylated, on either Lys-155 or Lys-158. Methylated by PrmB.

Its function is as follows. One of the primary rRNA binding proteins, it binds directly near the 3'-end of the 23S rRNA, where it nucleates assembly of the 50S subunit. The polypeptide is Large ribosomal subunit protein uL3 (Rhodopseudomonas palustris (strain ATCC BAA-98 / CGA009)).